A 471-amino-acid polypeptide reads, in one-letter code: Nuclear distribution protein PAC1 (471 aa).

Residues 9–41 (QAEELHKSMIAYLLSVNLSKSAAALREELADSV) form the LisH domain. Residues 60 to 87 (TSVVRLQKKIMDLESRNAALQQELDSAT) adopt a coiled-coil conformation. Polar residues predominate over residues 83–93 (LDSATPTSLSR). Residues 83 to 108 (LDSATPTSLSRRNQDPASWLPRAPAR) are disordered. WD repeat units lie at residues 113–154 (SHRG…RTIK), 156–196 (HTRA…KNIR), 200–247 (GHDH…CVKT), 250–289 (GHLDWVRDVFPSPDGRFLMSGGDDRVPRLLDASSGETKST), 292–352 (GHEH…IKTL), 354–393 (GHDNWIRALVFHPGGKYLLSVSDDKTLRCWDLSQECKCVR), 398–428 (AHGHFVSCIRWAPNIINESGLVSGEGGINGQ), and 429–467 (GTPSMNGVSISTTSKKEDTGGGGKIRCVIATGSVDMNVR). The tract at residues 424–449 (GINGQGTPSMNGVSISTTSKKEDTGG) is disordered. Residues 428-441 (QGTPSMNGVSISTT) are compositionally biased toward polar residues.

It belongs to the WD repeat LIS1/nudF family. In terms of assembly, self-associates. Interacts with NDL1 and dynein.

It localises to the cytoplasm. Its subcellular location is the cytoskeleton. The protein resides in the spindle pole. Functionally, positively regulates the activity of the minus-end directed microtubule motor protein dynein. May enhance dynein-mediated microtubule sliding by targeting dynein to the microtubule plus end. Required for nuclear migration during vegetative growth as well as development. Required for retrograde early endosome (EE) transport from the hyphal tip. Required for localization of dynein to the mitotic spindle poles. Recruits additional proteins to the dynein complex at SPBs. The polypeptide is Nuclear distribution protein PAC1 (Coccidioides posadasii (strain C735) (Valley fever fungus)).